The primary structure comprises 1037 residues: Tyrosine-protein kinase-like otk (1037 aa).

An N-terminal signal peptide occupies residues 1–22; it reads MAALRISVWILVQALMMALVSS. Residues asparagine 23 and asparagine 39 are each glycosylated (N-linked (GlcNAc...) asparagine). The Extracellular portion of the chain corresponds to 23-582; the sequence is NSSHFLQLPQ…GGDGFLVTRA (560 aa). Ig-like C2-type domains lie at 25-115, 114-200, 252-366, 369-464, and 469-559; these read SHFL…AKLS, LSVI…RVMS, PEDL…APIN, PGTL…VAIN, and PKFS…VQLV. 4 cysteine pairs are disulfide-bonded: cysteine 46/cysteine 96, cysteine 138/cysteine 189, cysteine 277/cysteine 355, and cysteine 400/cysteine 448. N-linked (GlcNAc...) asparagine glycans are attached at residues asparagine 337, asparagine 418, asparagine 430, asparagine 445, asparagine 458, asparagine 513, and asparagine 525. Cysteine 491 and cysteine 543 are oxidised to a cystine. The helical transmembrane segment at 583–603 threads the bilayer; that stretch reads VLITMTVALAYIVLVVGLMLW. Over 604-1037 the chain is Cytoplasmic; that stretch reads CRYRRQARKA…LSKAMQSLEK (434 aa). Disordered stretches follow at residues 618–681 and 719–764; these read LSTK…KKSA and ATGS…KTSM. A compositionally biased stretch (polar residues) spans 653–675; that stretch reads QSRSKSNGDAQKSDDTACSQQSR. Position 680 is a phosphoserine (serine 680). The 342-residue stretch at 694 to 1035 folds into the Protein kinase; inactive domain; it reads LTELIQIGRG…AALSKAMQSL (342 aa). A compositionally biased stretch (basic and acidic residues) spans 724–735; sequence SDKDADTEKQHS.

This sequence belongs to the protein kinase superfamily. Tyr protein kinase family. Insulin receptor subfamily. As to quaternary structure, interacts with plexA; component of a receptor complex that mediates the repulsive signaling in response to Semaphorin ligands.

The protein localises to the cell membrane. In terms of biological role, acts as a calcium-dependent, homophilic cell adhesion molecule that regulates neural recognition during the development of the nervous system. Component of the repulsive Plexin signaling response to regulate motor axon guidance at the embryonic stage. Also component of a receptor complex that is required in the adult visual system to innervate the lamina layer; specific targeting of R1-R6 axons. The chain is Tyrosine-protein kinase-like otk from Drosophila ananassae (Fruit fly).